Consider the following 329-residue polypeptide: Gamma-resorcylate decarboxylase (329 aa).

Zn(2+) contacts are provided by glutamate 8, histidine 10, histidine 167, and aspartate 290. Aspartate 290 is a catalytic residue.

The protein belongs to the metallo-dependent hydrolases superfamily. ACMSD family. Requires Zn(2+) as cofactor.

The catalysed reaction is 2,6-dihydroxybenzoate + H(+) = resorcinol + CO2. It functions in the pathway aromatic compound metabolism. Involved in the gamma-resorcylate (2,6-dihydroxybenzoate) catabolism. Catalyzes the reversible decarboxylation of gamma-resorcylate to resorcinol. The chain is Gamma-resorcylate decarboxylase from Rhodococcus jostii (strain RHA1).